A 604-amino-acid polypeptide reads, in one-letter code: Ectonucleoside triphosphate diphosphohydrolase 7 (604 aa).

Over 1–28 (MARISFSYLCPASWYFTVPTVSPFLRQR) the chain is Cytoplasmic. The helical transmembrane segment at 29 to 49 (VAFLGLFFISCLLLLMLIIDF) threads the bilayer. Residues 50 to 546 (RHWSASLPRD…QAHGSWFRLS (497 aa)) are Vesicular-facing. E217 (proton acceptor) is an active-site residue. Residue N330 is glycosylated (N-linked (GlcNAc...) asparagine). Residues C448 and C477 are joined by a disulfide bond. Residues 547-567 (FVYNHYLFFACILVVLLAIVL) form a helical membrane-spanning segment. Over 568–604 (YLLRLRRIHHRQTRASAPLDLLWLEEVVPMMGVQVGP) the chain is Cytoplasmic.

It belongs to the GDA1/CD39 NTPase family. Requires Ca(2+) as cofactor. It depends on Mg(2+) as a cofactor.

Its subcellular location is the cytoplasmic vesicle membrane. The catalysed reaction is a ribonucleoside 5'-triphosphate + H2O = a ribonucleoside 5'-diphosphate + phosphate + H(+). The enzyme catalyses UTP + H2O = UDP + phosphate + H(+). It carries out the reaction GTP + H2O = GDP + phosphate + H(+). It catalyses the reaction CTP + H2O = CDP + phosphate + H(+). Catalyzes the hydrolysis of nucleoside triphosphates and diphosphates in a calcium- or magnesium-dependent manner. Preferentially hydrolyzes nucleoside 5'-triphosphates, with substrate preference for UTP &gt; GTP &gt; CTP. Hydrolyzes ATP and nucleoside diphosphates only to a minor extent. The sequence is that of Ectonucleoside triphosphate diphosphohydrolase 7 (ENTPD7) from Pongo abelii (Sumatran orangutan).